We begin with the raw amino-acid sequence, 494 residues long: Guanosine-5'-triphosphate,3'-diphosphate pyrophosphatase (494 aa).

It belongs to the GppA/Ppx family. GppA subfamily.

It carries out the reaction guanosine 3'-diphosphate 5'-triphosphate + H2O = guanosine 3',5'-bis(diphosphate) + phosphate + H(+). It functions in the pathway purine metabolism; ppGpp biosynthesis; ppGpp from GTP: step 2/2. Functionally, catalyzes the conversion of pppGpp to ppGpp. Guanosine pentaphosphate (pppGpp) is a cytoplasmic signaling molecule which together with ppGpp controls the 'stringent response', an adaptive process that allows bacteria to respond to amino acid starvation, resulting in the coordinated regulation of numerous cellular activities. The protein is Guanosine-5'-triphosphate,3'-diphosphate pyrophosphatase of Cronobacter sakazakii (strain ATCC BAA-894) (Enterobacter sakazakii).